Here is a 225-residue protein sequence, read N- to C-terminus: GrpE protein homolog 2, mitochondrial (225 aa).

A mitochondrion-targeting transit peptide spans 1 to 32; the sequence is MAVRSLWAGRLRVQRLLAWSAAWESKGWPLPF. An N6-acetyllysine modification is found at Lys-142.

The protein belongs to the GrpE family. Probable component of the PAM complex at least composed of a mitochondrial HSP70 protein, GRPEL1 or GRPEL2, TIMM44, TIMM16/PAM16 and TIMM14/DNAJC19.

Its subcellular location is the mitochondrion matrix. Essential component of the PAM complex, a complex required for the translocation of transit peptide-containing proteins from the inner membrane into the mitochondrial matrix in an ATP-dependent manner. Seems to control the nucleotide-dependent binding of mitochondrial HSP70 to substrate proteins. Stimulates ATPase activity of mt-HSP70. May also serve to modulate the interconversion of oligomeric (inactive) and monomeric (active) forms of mt-HSP70. This chain is GrpE protein homolog 2, mitochondrial (GRPEL2), found in Homo sapiens (Human).